A 740-amino-acid chain; its full sequence is Polyribonucleotide nucleotidyltransferase (740 aa).

Positions 496 and 502 each coordinate Mg(2+). The region spanning 563-622 is the KH domain; that stretch reads PAIIRTSIHPDKIRDIIGPGGKIIKKLVEETGADIDIEDDGRVFIAAVDREKGKRALEII. The S1 motif domain maps to 632 to 706; it reads GKLYNGKVTR…QQGRLKLSKK (75 aa). The segment at 707–740 is disordered; the sequence is EAMRDMGLAPAESTSEQPEKRERRPFSRPKATKE. Basic and acidic residues predominate over residues 723-740; that stretch reads QPEKRERRPFSRPKATKE.

It belongs to the polyribonucleotide nucleotidyltransferase family. Mg(2+) serves as cofactor.

The protein resides in the cytoplasm. The catalysed reaction is RNA(n+1) + phosphate = RNA(n) + a ribonucleoside 5'-diphosphate. In terms of biological role, involved in mRNA degradation. Catalyzes the phosphorolysis of single-stranded polyribonucleotides processively in the 3'- to 5'-direction. This is Polyribonucleotide nucleotidyltransferase from Desulforamulus reducens (strain ATCC BAA-1160 / DSM 100696 / MI-1) (Desulfotomaculum reducens).